Consider the following 47-residue polypeptide: Lysis protein for colicin E7 (47 aa).

A signal peptide spans methionine 1 to alanine 19. Cysteine 20 carries N-palmitoyl cysteine lipidation. Cysteine 20 is lipidated: S-diacylglycerol cysteine.

The protein localises to the cell outer membrane. In terms of biological role, lysis proteins are required for both colicin release and partial cell lysis. The sequence is that of Lysis protein for colicin E7 (lys) from Escherichia coli.